A 468-amino-acid chain; its full sequence is Na(+)/H(+) antiporter NhaA (468 aa).

Helical transmembrane passes span 32–52 (FLHI…IALL), 83–103 (LHFW…GMEI), 119–139 (ALPM…YLAI), 148–168 (GWAV…ALLG), 178–198 (FLLA…AVAF), 205–225 (GGFL…WIGV), 320–340 (ALHP…NAGV), 354–374 (GAMF…IVSV), 397–417 (LVGL…TLAF), and 428–448 (LGVL…GFIY).

It belongs to the NhaA Na(+)/H(+) (TC 2.A.33) antiporter family.

It localises to the cell inner membrane. The enzyme catalyses Na(+)(in) + 2 H(+)(out) = Na(+)(out) + 2 H(+)(in). Na(+)/H(+) antiporter that extrudes sodium in exchange for external protons. This is Na(+)/H(+) antiporter NhaA from Cupriavidus necator (strain ATCC 17699 / DSM 428 / KCTC 22496 / NCIMB 10442 / H16 / Stanier 337) (Ralstonia eutropha).